The chain runs to 281 residues: Nucleotide-binding protein Noc_2797 (281 aa).

8–15 (GVSGSGKS) is a binding site for ATP. 58-61 (DARN) is a GTP binding site.

Belongs to the RapZ-like family.

Displays ATPase and GTPase activities. This Nitrosococcus oceani (strain ATCC 19707 / BCRC 17464 / JCM 30415 / NCIMB 11848 / C-107) protein is Nucleotide-binding protein Noc_2797.